A 509-amino-acid chain; its full sequence is Phytase A (509 aa).

The first 15 residues, 1–15 (MFLLMVPLFSYLAAA), serve as a signal peptide directing secretion. An intrachain disulfide couples Cys-27 to Cys-36. 1D-myo-inositol hexakisphosphate is bound by residues Gln-46, Tyr-47, Arg-75, His-76, Arg-79, Thr-82, and Arg-164. Cystine bridges form between Cys-65–Cys-444, Cys-216–Cys-507, Cys-266–Cys-295, and Cys-478–Cys-486. The active-site Nucleophile is His-76. 2 N-linked (GlcNAc...) asparagine glycosylation sites follow: Asn-171 and Asn-208. Lys-314 is a binding site for 1D-myo-inositol hexakisphosphate. N-linked (GlcNAc...) asparagine glycans are attached at residues Asn-348, Asn-352, and Asn-367. Residues His-376 and Asp-377 each contribute to the 1D-myo-inositol hexakisphosphate site. An N-linked (GlcNAc...) asparagine glycan is attached at Asn-401.

This sequence belongs to the histidine acid phosphatase family. As to quaternary structure, monomer.

It is found in the secreted. The enzyme catalyses 1D-myo-inositol hexakisphosphate + H2O = 1D-myo-inositol 1,2,4,5,6-pentakisphosphate + phosphate. It carries out the reaction 1D-myo-inositol 1,2,4,5,6-pentakisphosphate + H2O = 1D-myo-inositol 1,2,5,6-tetrakisphosphate + phosphate. It catalyses the reaction 1D-myo-inositol 1,2,5,6-tetrakisphosphate + H2O = 1D-myo-inositol 1,2,6-trisphosphate + phosphate. The catalysed reaction is 1D-myo-inositol 1,2,6-trisphosphate + H2O = 1D-myo-inositol 1,2-bisphosphate + phosphate. The enzyme catalyses 1D-myo-inositol 1,2-bisphosphate + H2O = 1D-myo-inositol 2-phosphate + phosphate. Its function is as follows. Catalyzes the phosphate monoester hydrolysis of phytic acid (myo-inositol hexakisphosphate), which results in the stepwise formation of myo-inositol pentakis-, tetrakis-, tris-, bis-, and monophosphates, as well as the liberation of inorganic phosphate. Myo-inositol 2-monophosphate is the end product. Is also able to dephosphorylate the classic acid phosphatase substrate p-nitrophenyl phosphate. This chain is Phytase A (pht-1), found in Neurospora crassa (strain ATCC 24698 / 74-OR23-1A / CBS 708.71 / DSM 1257 / FGSC 987).